We begin with the raw amino-acid sequence, 123 residues long: Large ribosomal subunit protein bL12 (123 aa).

It belongs to the bacterial ribosomal protein bL12 family. Homodimer. Part of the ribosomal stalk of the 50S ribosomal subunit. Forms a multimeric L10(L12)X complex, where L10 forms an elongated spine to which 2 to 4 L12 dimers bind in a sequential fashion. Binds GTP-bound translation factors.

In terms of biological role, forms part of the ribosomal stalk which helps the ribosome interact with GTP-bound translation factors. Is thus essential for accurate translation. The polypeptide is Large ribosomal subunit protein bL12 (Shewanella sp. (strain MR-4)).